The primary structure comprises 218 residues: Glycerol-3-phosphate acyltransferase (218 aa).

5 consecutive transmembrane segments (helical) span residues 5-25 (ALGMIIFAYLCGSISSAILIC), 53-73 (LAAASVLICDVLKGMIPVWLA), 80-100 (PFYLGIVAIAACLGHIYPVFF), 115-135 (IAAIGWDLSGLIAGTWLLTVL), and 138-158 (GYSSLGAIISALLAPFYVWWF).

The protein belongs to the PlsY family. As to quaternary structure, probably interacts with PlsX.

Its subcellular location is the cell inner membrane. It catalyses the reaction an acyl phosphate + sn-glycerol 3-phosphate = a 1-acyl-sn-glycero-3-phosphate + phosphate. Its pathway is lipid metabolism; phospholipid metabolism. Catalyzes the transfer of an acyl group from acyl-phosphate (acyl-PO(4)) to glycerol-3-phosphate (G3P) to form lysophosphatidic acid (LPA). This enzyme utilizes acyl-phosphate as fatty acyl donor, but not acyl-CoA or acyl-ACP. The polypeptide is Glycerol-3-phosphate acyltransferase (Proteus mirabilis (strain HI4320)).